A 175-amino-acid polypeptide reads, in one-letter code: MEKLADLNYTLGVITLLNDTLHNILEEPGMVYFPYIVSALTVLFTMHKASLPAMKLAMRTFQCSYRIIKRVVVTLINTLLRLGGYNDYLTDKDETEKQINRVVKELRQQLTMIEKLTTREIEQVELLKRIYDMMIVRHDSEIDMSKETNQKAFKTLHDWKNDRSYDDNTEVIAPL.

The Lumenal segment spans residues 1-28 (MEKLADLNYTLGVITLLNDTLHNILEEP). N-linked (GlcNAc...) asparagine; by host glycosylation is found at N8 and N18. The chain crosses the membrane as a helical; Signal-anchor for type III membrane protein span at residues 29–51 (GMVYFPYIVSALTVLFTMHKASL). At 52–175 (PAMKLAMRTF…DDNTEVIAPL (124 aa)) the chain is on the cytoplasmic side. Residues E120 and Q123 each coordinate Ca(2+).

It belongs to the rotavirus NSP4 family. In terms of assembly, homotetramer. Interacts with the immature particle in the viroplasm. Interacts with host CAV1, early and late in infection. Interacts with host integrin ITGA1/ITGB1 heterodimer. Interacts with host integrin ITGA2/ITGB1 heterodimer. Interaction with microtubules blocks trafficking to the Golgi apparatus. In terms of processing, the N-glycosyl content is primarily Man(9)GlcNAc, with a small amount of Man(8)GlcNAc.

It is found in the host rough endoplasmic reticulum membrane. The protein resides in the host membrane. It localises to the host caveola. The protein localises to the secreted. Functionally, plays an essential role in the virus replication cycle by acting as a viroporin. Creates a pore in the host endoplasmic reticulum and as a consequence releases Ca(2+) in the cytoplasm of infected cell. In turn, high levels of cytoplasmic calcium trigger membrane trafficking and transport of viral ER-associated proteins to viroplasms, sites of viral genome replication and immature particle assembly. The secreted form acts as an enterotoxin that causes phospholipase C-dependent elevation of the intracellular calcium concentration in host intestinal mucosa cells. Increased concentration of intracellular calcium disrupts the cytoskeleton and the tight junctions, raising the paracellular permeability. Potentiates chloride ion secretion through a calcium ion-dependent signaling pathway, inducing age-dependent diarrhea. To perform this enterotoxigenic role in vivo, NSP4 is released from infected enterocytes in a soluble form capable of diffusing within the intestinal lumen and interacting with host plasma membrane receptors on neighboring epithelial cells such as integrins ITGA1/ITGB1 and ITGA2/ITGB1. The polypeptide is Non-structural glycoprotein 4 (Rotavirus A (isolate RVA/Mouse/United States/Eb/1982/G16P10[16]) (RV-A)).